Here is a 355-residue protein sequence, read N- to C-terminus: 3-isopropylmalate dehydrogenase (355 aa).

Substrate contacts are provided by Arg90, Arg100, Arg128, and Asp222. Asp222, Asp246, and Asp250 together coordinate Mg(2+). 280–292 (GSAPDIAGKGIAN) is a binding site for NAD(+).

Belongs to the isocitrate and isopropylmalate dehydrogenases family. LeuB type 1 subfamily. In terms of assembly, homodimer. Requires Mg(2+) as cofactor. The cofactor is Mn(2+).

The protein localises to the cytoplasm. It catalyses the reaction (2R,3S)-3-isopropylmalate + NAD(+) = 4-methyl-2-oxopentanoate + CO2 + NADH. It participates in amino-acid biosynthesis; L-leucine biosynthesis; L-leucine from 3-methyl-2-oxobutanoate: step 3/4. Functionally, catalyzes the oxidation of 3-carboxy-2-hydroxy-4-methylpentanoate (3-isopropylmalate) to 3-carboxy-4-methyl-2-oxopentanoate. The product decarboxylates to 4-methyl-2 oxopentanoate. In Burkholderia lata (strain ATCC 17760 / DSM 23089 / LMG 22485 / NCIMB 9086 / R18194 / 383), this protein is 3-isopropylmalate dehydrogenase.